We begin with the raw amino-acid sequence, 572 residues long: Arginine--tRNA ligase (572 aa).

The short motif at 122–132 (PNLAKEMHVGH) is the 'HIGH' region element.

This sequence belongs to the class-I aminoacyl-tRNA synthetase family. Monomer.

The protein localises to the cytoplasm. The catalysed reaction is tRNA(Arg) + L-arginine + ATP = L-arginyl-tRNA(Arg) + AMP + diphosphate. In Neisseria meningitidis serogroup B (strain ATCC BAA-335 / MC58), this protein is Arginine--tRNA ligase.